The chain runs to 546 residues: Probable ATP-dependent RNA helicase DDX56 (546 aa).

The Q motif signature appears at 7–35 (LGFEHMGLDPRLLQAVTDLGWSRPTLIQE). The region spanning 38–218 (IPLALEGKDL…ELVLHNPVTL (181 aa)) is the Helicase ATP-binding domain. 51–58 (ARTGSGKT) contributes to the ATP binding site. Ser126 is subject to Phosphoserine. Thr141 carries the phosphothreonine modification. The short motif at 166-169 (DEAD) is the DEAD box element. Positions 230–424 (QLQQFQVVCE…PYQFQMEEIE (195 aa)) constitute a Helicase C-terminal domain. 2 disordered regions span residues 324-344 (VKGKRRGRGSKGNKASDPESG) and 508-546 (RKKRRKVPFSRKAKKVKAQNPLRDFKHRGKKPKPAAKPS). Composition is skewed to basic residues over residues 325–334 (KGKRRGRGSK), 508–524 (RKKRRKVPFSRKAKKVK), and 532–546 (FKHRGKKPKPAAKPS).

Belongs to the DEAD box helicase family. DDX56/DBP9 subfamily. May form homooligomeric complexes. Interacts with IRF3. Interacts with OCT4 and POU5F1.

The protein resides in the nucleus. The protein localises to the nucleolus. The enzyme catalyses ATP + H2O = ADP + phosphate + H(+). Nucleolar RNA helicase that plays a role in various biological processes including innate immunity, ribosome biogenesis or nucleolus organization. Plays an essential role in maintaining nucleolar integrity in planarian stem cells. Maintains embryonic stem cells proliferation by conventional regulation of ribosome assembly and interaction with OCT4 and POU5F1 complex. Regulates antiviral innate immunity by inhibiting the virus-triggered signaling nuclear translocation of IRF3. Mechanistically, acts by disrupting the interaction between IRF3 and importin IPO5. May play a role in later stages of the processing of the pre-ribosomal particles leading to mature 60S ribosomal subunits. Has intrinsic ATPase activity. This is Probable ATP-dependent RNA helicase DDX56 (Ddx56) from Mus musculus (Mouse).